Consider the following 319-residue polypeptide: Probable metallo-hydrolase YqjP (319 aa).

7 residues coordinate Zn(2+): His67, His69, Asp71, His72, His165, Asp184, and His231.

The protein belongs to the metallo-beta-lactamase superfamily. Zn(2+) is required as a cofactor.

This is Probable metallo-hydrolase YqjP (yqjP) from Bacillus subtilis (strain 168).